A 191-amino-acid polypeptide reads, in one-letter code: Probable DNA-directed RNA polymerase subunit delta (191 aa).

The HTH HARE-type domain occupies 14–83; it reads LSMIEVARAI…GDNKWGLRSW (70 aa). 2 stretches are compositionally biased toward acidic residues: residues 119–133 and 143–191; these read EDAI…EDEN and YDND…ETND. A disordered region spans residues 119–191; that stretch reads EDAIDYNDDD…DDDYEDETND (73 aa).

This sequence belongs to the RpoE family. As to quaternary structure, RNAP is composed of a core of 2 alpha, a beta and a beta' subunits. The core is associated with a delta subunit and one of several sigma factors.

In terms of biological role, participates in both the initiation and recycling phases of transcription. In the presence of the delta subunit, RNAP displays an increased specificity of transcription, a decreased affinity for nucleic acids, and an increased efficiency of RNA synthesis because of enhanced recycling. This Streptococcus thermophilus (strain ATCC BAA-491 / LMD-9) protein is Probable DNA-directed RNA polymerase subunit delta.